Reading from the N-terminus, the 125-residue chain is Small ribosomal subunit protein uS13 (125 aa).

The span at 94-116 shows a compositional bias: basic residues; sequence GLPVRGQRTRTNARTRKGPRKAV. Residues 94-125 are disordered; the sequence is GLPVRGQRTRTNARTRKGPRKAVRASSAKAGR.

The protein belongs to the universal ribosomal protein uS13 family. Part of the 30S ribosomal subunit. Forms a loose heterodimer with protein S19. Forms two bridges to the 50S subunit in the 70S ribosome.

In terms of biological role, located at the top of the head of the 30S subunit, it contacts several helices of the 16S rRNA. In the 70S ribosome it contacts the 23S rRNA (bridge B1a) and protein L5 of the 50S subunit (bridge B1b), connecting the 2 subunits; these bridges are implicated in subunit movement. Contacts the tRNAs in the A and P-sites. The protein is Small ribosomal subunit protein uS13 of Nitrosospira multiformis (strain ATCC 25196 / NCIMB 11849 / C 71).